A 25-amino-acid polypeptide reads, in one-letter code: Xenoposin precursor fragment BM1 (25 aa).

As to expression, expressed by the skin glands.

It is found in the secreted. Functionally, antimicrobial peptide. The chain is Xenoposin precursor fragment BM1 from Xenopus boumbaensis (Mawa clawed frog).